The sequence spans 384 residues: Probable circularly permuted 1,3-beta-glucanase PGA52 (384 aa).

The first 17 residues, 1–17 (MLFSSLLVSTLVSVATA), serve as a signal peptide directing secretion. N-linked (GlcNAc...) asparagine glycans are attached at residues Asn118, Asn128, Asn170, Asn210, and Asn244. Residues 254–259 (EFDIFE) carry the ExDxxE motif motif. N-linked (GlcNAc...) asparagine glycosylation is found at Asn262 and Asn318. Residue Ser361 is the site of GPI-anchor amidated serine attachment. Positions 362-384 (GGVSYQPSFITNLLMTVLTLWVI) are cleaved as a propeptide — removed in mature form.

Belongs to the PGA52 family.

The protein localises to the cell membrane. It catalyses the reaction Hydrolysis of (1-&gt;3)-beta-D-glucosidic linkages in (1-&gt;3)-beta-D-glucans.. Probable circularly permuted 1,3-beta-glucanase involved in cell wall modification through beta-1,3-glucan network alterations such as increased branching or remodeling. In Candida albicans (strain SC5314 / ATCC MYA-2876) (Yeast), this protein is Probable circularly permuted 1,3-beta-glucanase PGA52 (PGA52).